The following is a 458-amino-acid chain: Alpha-2C adrenergic receptor (458 aa).

Residues M1–V51 are Extracellular-facing. Residues N19 and N33 are each glycosylated (N-linked (GlcNAc...) asparagine). A helical transmembrane segment spans residues A52 to V76. Topologically, residues L77–L88 are cytoplasmic. The chain crosses the membrane as a helical span at residues F89–M114. Over A115–C124 the chain is Extracellular. C124 and C202 form a disulfide bridge. A helical transmembrane segment spans residues G125 to L147. Over D148–V168 the chain is Cytoplasmic. A helical membrane pass occupies residues K169–Y191. Residues R192 to E207 are Extracellular-facing. The helical transmembrane segment at T208–A231 threads the bilayer. Residues R232–V379 are Cytoplasmic-facing. The tract at residues S245–R343 is disordered. Basic residues predominate over residues R291–R303. Residues L380 to I403 form a helical membrane-spanning segment. The Extracellular segment spans residues C404 to K416. A helical transmembrane segment spans residues F417–N437. Residues Q438–Q458 lie on the Cytoplasmic side of the membrane.

This sequence belongs to the G-protein coupled receptor 1 family. Adrenergic receptor subfamily. ADRA2C sub-subfamily.

It localises to the cell membrane. In terms of biological role, alpha-2 adrenergic receptors mediate the catecholamine-induced inhibition of adenylate cyclase through the action of G proteins. The polypeptide is Alpha-2C adrenergic receptor (Adra2c) (Rattus norvegicus (Rat)).